Here is a 412-residue protein sequence, read N- to C-terminus: MNQYFLLHTYFQVSRLIGLCNLHYDSSNHRFILNHVPTVVYCVILNVVYLLVLPFALFVLTGNIYHCPDAGMFGVVYNVVALTKLLTMLFLMSSVWIQRRRLYKLGNDLMKMLHKFRFNLGNDCRNRCLCKGLLTSSRFVLLTQQLLTRDSVVNCESNSSLRQAMVPYQSAAIVYALIMILLMSYVDMTVYMVEVAGNWLLVNMTQGVREMVQDLEVLPERNGIPREMGLMQILAAWRKLWRRCRRLDALLKQFVDIFQWQVLFNLLTTYIFSIAVLFRLWIYLEFDKNFHLWKGILYAIIFLTHHVEIVMQFSIFEINRCKWLGLLEDVGNLWDINYSGRQCIKSSGTILSRKLEFSLLYMNRKLQLNPKRVRRLHIVGLFDLSNLTVHNMTRSIITNVLVLCQIAYKKYG.

2 consecutive transmembrane segments (helical) span residues 39-59 (VVYC…ALFV) and 72-92 (MFGV…LFLM). Asn-158 is a glycosylation site (N-linked (GlcNAc...) asparagine). Residues 173 to 193 (IVYALIMILLMSYVDMTVYMV) form a helical membrane-spanning segment. Residue Asn-203 is glycosylated (N-linked (GlcNAc...) asparagine). 3 helical membrane-spanning segments follow: residues 224–241 (IPRE…RKLW), 262–282 (VLFN…RLWI), and 296–316 (ILYA…FSIF). N-linked (GlcNAc...) asparagine glycans are attached at residues Asn-337, Asn-386, and Asn-391.

It belongs to the insect chemoreceptor superfamily. Gustatory receptor (GR) family. Gr10a subfamily.

The protein localises to the cell membrane. Functionally, probable gustatory receptor which mediates acceptance or avoidance behavior, depending on its substrates. The chain is Putative gustatory receptor 58c (Gr58c) from Drosophila melanogaster (Fruit fly).